Here is a 101-residue protein sequence, read N- to C-terminus: MGIRYLLVLVLVLLVLGCEVQGAHMPQQDEATSSSLFTQLQESLYGYWGTAKAAAQELYEKTYLTTMDEKIREIYNKSTAAVSTYAGIFTDQLLSMLKGDQ.

The N-terminal stretch at 1–22 is a signal peptide; that stretch reads MGIRYLLVLVLVLLVLGCEVQG. The tract at residues 66 to 74 is lipid binding; sequence TMDEKIREI. The lipoprotein lipase cofactor stretch occupies residues 78–101; sequence STAAVSTYAGIFTDQLLSMLKGDQ.

It belongs to the apolipoprotein C2 family. Proapolipoprotein C-II is synthesized as a sialic acid containing glycoprotein which is subsequently desialylated prior to its proteolytic processing. Post-translationally, proapolipoprotein C-II, the major form found in plasma undergoes proteolytic cleavage of its N-terminal hexapeptide to generate apolipoprotein C-II, which occurs as the minor form in plasma.

It is found in the secreted. Functionally, component of chylomicrons, very low-density lipoproteins (VLDL), low-density lipoproteins (LDL), and high-density lipoproteins (HDL) in plasma. Plays an important role in lipoprotein metabolism as an activator of lipoprotein lipase. Both proapolipoprotein C-II and apolipoprotein C-II can activate lipoprotein lipase. This is Apolipoprotein C-II (APOC2) from Phoca vitulina (Harbor seal).